Reading from the N-terminus, the 425-residue chain is 2,3-diketo-L-gulonate TRAP transporter large permease protein YiaN (425 aa).

11 consecutive transmembrane segments (helical) span residues 3–23, 54–74, 93–113, 139–159, 170–190, 209–229, 235–255, 277–297, 314–334, 355–375, and 399–419; these read VLIF…IAWA, FSLL…AGGL, LGYV…SAVA, LIAS…FIIF, LFMA…LTWW, IWHS…IIGG, FTPT…ATVI, VVMF…IAEL, LLFI…DLTP, IYFG…PPIG, and YVLV…LIIL.

Belongs to the TRAP transporter large permease family. As to quaternary structure, the complex comprises the extracytoplasmic solute receptor protein YiaO, and the two transmembrane proteins YiaM and YiaN.

It localises to the cell inner membrane. Its function is as follows. Part of the tripartite ATP-independent periplasmic (TRAP) transport system YiaMNO involved in the uptake of 2,3-diketo-L-gulonate. This Escherichia coli (strain K12) protein is 2,3-diketo-L-gulonate TRAP transporter large permease protein YiaN (yiaN).